Consider the following 170-residue polypeptide: Probable peptide methionine sulfoxide reductase (170 aa).

Belongs to the MsrA Met sulfoxide reductase family.

It is found in the cytoplasm. The protein resides in the nucleus. The enzyme catalyses L-methionyl-[protein] + [thioredoxin]-disulfide + H2O = L-methionyl-(S)-S-oxide-[protein] + [thioredoxin]-dithiol. It carries out the reaction [thioredoxin]-disulfide + L-methionine + H2O = L-methionine (S)-S-oxide + [thioredoxin]-dithiol. Has an important function as a repair enzyme for proteins that have been inactivated by oxidation. Catalyzes the reversible oxidation-reduction of methionine sulfoxide in proteins to methionine. This chain is Probable peptide methionine sulfoxide reductase (mxr1), found in Schizosaccharomyces pombe (strain 972 / ATCC 24843) (Fission yeast).